The primary structure comprises 211 residues: MVKYPSGSLAAFRKPVTTQKKMRTGKRSYTHKKGVNFSDRGMTLEQQINESNKYYLTEEIAVVHKKPTPIQIVKVDYPKRSKAVIREAYFRQASTTDYNGVYKGYYLDFEAKETKNKTNFPLKNFHEHQIFHLAECLKQQGICFTIIRFASLERYFVTPASFVINAWRKAEKSSMTLKEIESHSYEIKSGFRPTLPYLKAVDNFIADRKRE.

The Mg(2+) site is built by T95, D97, E110, and Q129.

This sequence belongs to the RecU family. Requires Mg(2+) as cofactor.

Its subcellular location is the cytoplasm. It catalyses the reaction Endonucleolytic cleavage at a junction such as a reciprocal single-stranded crossover between two homologous DNA duplexes (Holliday junction).. Its function is as follows. Endonuclease that resolves Holliday junction intermediates in genetic recombination. Cleaves mobile four-strand junctions by introducing symmetrical nicks in paired strands. Promotes annealing of linear ssDNA with homologous dsDNA. Required for DNA repair, homologous recombination and chromosome segregation. This chain is Holliday junction resolvase RecU, found in Lactobacillus acidophilus (strain ATCC 700396 / NCK56 / N2 / NCFM).